Here is a 69-residue protein sequence, read N- to C-terminus: Guanine nucleotide-binding protein G(I)/G(S)/G(O) subunit gamma-T2 (69 aa).

Cysteine 66 is modified (cysteine methyl ester). The S-farnesyl cysteine moiety is linked to residue cysteine 66. A propeptide spans 67–69 (LIS) (removed in mature form).

This sequence belongs to the G protein gamma family. G proteins are composed of 3 units, alpha, beta and gamma. Retinal cones.

The protein localises to the cell membrane. Guanine nucleotide-binding proteins (G proteins) are involved as a modulator or transducer in various transmembrane signaling systems. The beta and gamma chains are required for the GTPase activity, for replacement of GDP by GTP, and for G protein-effector interaction. This chain is Guanine nucleotide-binding protein G(I)/G(S)/G(O) subunit gamma-T2 (GNGT2), found in Homo sapiens (Human).